A 496-amino-acid polypeptide reads, in one-letter code: GTPase Der (496 aa).

EngA-type G domains follow at residues 3–166 (PVVA…FDNL) and 208–381 (IKLA…RSAT). Residues 9-16 (GRPNVGKS), 56-60 (DTGGI), 118-121 (NKVD), 214-221 (GRPNVGKS), 261-265 (DTAGV), and 326-329 (NKWD) each bind GTP. The KH-like domain occupies 382-466 (TRVGTSVLTR…PIRIQFQNSD (85 aa)).

Belongs to the TRAFAC class TrmE-Era-EngA-EngB-Septin-like GTPase superfamily. EngA (Der) GTPase family. As to quaternary structure, associates with the 50S ribosomal subunit.

Its function is as follows. GTPase that plays an essential role in the late steps of ribosome biogenesis. The polypeptide is GTPase Der (Vibrio vulnificus (strain YJ016)).